The chain runs to 56 residues: MAVQQNRKTRSKRGMRRSHDALTTAALSVDATSGETHLRHNVTAEGYYRGKKVINK.

The disordered stretch occupies residues 1–28 (MAVQQNRKTRSKRGMRRSHDALTTAALS). Over residues 7-16 (RKTRSKRGMR) the composition is skewed to basic residues.

This sequence belongs to the bacterial ribosomal protein bL32 family.

The sequence is that of Large ribosomal subunit protein bL32 from Vibrio vulnificus (strain CMCP6).